The chain runs to 616 residues: Spastin (616 aa).

A disordered region spans residues Met-1–Ser-44. The tract at residues Met-1 to Leu-50 is required for nuclear localization. Residues Met-1 to Pro-56 are Cytoplasmic-facing. The segment at Met-1–Gln-80 is required for interaction with ATL1. Residues Met-1 to Leu-194 are required for midbody localization. A required for interaction with RTN1 region spans residues Met-1–Lys-300. The short motif at Pro-4–Lys-11 is the Nuclear localization signal element. Pro residues-rich tracts occupy residues Ser-18–Cys-28 and Ala-35–Ser-44. The interval Leu-50–Met-87 is required for interaction with SSNA1 and microtubules. An intramembrane region (helical) is located at residues Leu-57–Trp-77. Residues Leu-59–Val-67 carry the Nuclear export signal motif. At Leu-78 to Val-616 the chain is on the cytoplasmic side. A sufficient for interaction with CHMP1B region spans residues Glu-112 to Glu-196. Residues Glu-114–Pro-200 form a required for interaction with microtubules region. Positions His-120–Leu-195 constitute an MIT domain. The segment at Gly-223–Ala-266 is disordered. Residues Gln-226–Ile-328 form a sufficient for interaction with microtubules region. The sufficient for microtubule severing stretch occupies residues Glu-228 to Val-616. Phosphoserine is present on residues Ser-245 and Ser-268. Residues Ser-270–Ile-328 form a required for interaction with microtubules and microtubule severing region. The disordered stretch occupies residues Met-278–Lys-311. Positions Gly-283–Thr-306 are enriched in polar residues. Thr-306 carries the post-translational modification Phosphothreonine. The Nuclear localization signal motif lies at Arg-309–Lys-312. The interval Lys-310 to Lys-312 is required for interaction with microtubules. Gly-382–Thr-389 is an ATP binding site. Ser-597 bears the Phosphoserine mark.

The protein belongs to the AAA ATPase family. Spastin subfamily. As to quaternary structure, homohexamer. Mostly monomeric, but assembles into hexameric structure for short periods of time. Oligomerization seems to be a prerequisite for catalytic activity. Binding to ATP in a cleft between two adjacent subunits stabilizes the homohexameric form. Binds to microtubules at least in part via the alpha-tubulin and beta-tubulin tails. The hexamer adopts a ring conformation through which microtubules pass prior to being severed. Does not interact strongly with tubulin heterodimers. Interacts (via MIT domain) with CHMP1B; the interaction is direct. Interacts with SSNA1. Interacts with ATL1. Interacts with RTN1. Interacts with ZFYVE27. Interacts with REEP1. Interacts (via MIT domain) with IST1.

Its subcellular location is the membrane. It is found in the endoplasmic reticulum. The protein localises to the midbody. It localises to the cytoplasm. The protein resides in the cytoskeleton. Its subcellular location is the microtubule organizing center. It is found in the centrosome. The protein localises to the perinuclear region. It localises to the nucleus. The protein resides in the spindle. Its subcellular location is the cell projection. It is found in the axon. It carries out the reaction n ATP + n H2O + a microtubule = n ADP + n phosphate + (n+1) alpha/beta tubulin heterodimers.. With respect to regulation, allosteric enzyme with a cooperative mechanism; at least two neighbor subunits influence each other strongly in spastin hexamers. Microtubule binding promotes cooperative interactions among spastin subunits. In terms of biological role, ATP-dependent microtubule severing protein that specifically recognizes and cuts microtubules that are polyglutamylated. Preferentially recognizes and acts on microtubules decorated with short polyglutamate tails: severing activity increases as the number of glutamates per tubulin rises from one to eight, but decreases beyond this glutamylation threshold. Severing activity is not dependent on tubulin acetylation or detyrosination. Microtubule severing promotes reorganization of cellular microtubule arrays and the release of microtubules from the centrosome following nucleation. It is critical for the biogenesis and maintenance of complex microtubule arrays in axons, spindles and cilia. SPAST is involved in abscission step of cytokinesis and nuclear envelope reassembly during anaphase in cooperation with the ESCRT-III complex. Recruited at the midbody, probably by IST1, and participates in membrane fission during abscission together with the ESCRT-III complex. Recruited to the nuclear membrane by IST1 and mediates microtubule severing, promoting nuclear envelope sealing and mitotic spindle disassembly during late anaphase. Required for membrane traffic from the endoplasmic reticulum (ER) to the Golgi and endosome recycling. Recruited by IST1 to endosomes and regulates early endosomal tubulation and recycling by mediating microtubule severing. Probably plays a role in axon growth and the formation of axonal branches. The chain is Spastin from Sus scrofa (Pig).